The sequence spans 600 residues: Pyranose dehydrogenase (600 aa).

Residues M1 to G25 form the signal peptide. Residues N99 and N114 are each glycosylated (N-linked (GlcNAc...) asparagine). Position 127 is a tele-8alpha-FAD histidine (H127). 5 N-linked (GlcNAc...) asparagine glycosylation sites follow: N199, N275, N342, N399, and N507. H535 (proton acceptor) is an active-site residue. N-linked (GlcNAc...) asparagine glycosylation is present at N546. The active site involves H579.

This sequence belongs to the GMC oxidoreductase family. In terms of assembly, monomer. It depends on FAD as a cofactor. N-glycosylated.

The protein localises to the secreted. It carries out the reaction pyranose + acceptor = pyranos-2-ulose + reduced acceptor.. The catalysed reaction is pyranose + acceptor = pyranos-3-ulose + reduced acceptor.. It catalyses the reaction pyranose + acceptor = pyranos-2,3-diulose + reduced acceptor.. The enzyme catalyses a pyranoside + acceptor = a pyranosid-3-ulose + reduced acceptor.. It carries out the reaction a pyranoside + acceptor = a pyranosid-3,4-diulose + reduced acceptor.. Functionally, catalyzes the single-oxidation or sequential double oxidation reaction of carbohydrates primarily at carbon-2 and/or carbon-3 with the concomitant reduction of the flavin. The enzyme exhibits a broad sugar substrate specificity, oxidizing different aldopyranoses to the corresponding C-1, C-2, C-3 or C-1,2, C-2,3 and C-3,4 (di)dehydro sugars with substrate-specific regioselectivity. Accepts only a narrow range of electron acceptors such as substituted benzoquinones and complexed metal ions and reacts extremely slowly with O(2) as acceptor. May play a role in the natural recycling of plant matter by oxidizing all major monosaccharides in lignocellulose and by reducing quinone compounds or reactive radical species generated during lignin depolymerization. The sequence is that of Pyranose dehydrogenase from Agaricus xanthodermus (Poison yellow meadow mushroom).